The sequence spans 132 residues: L-ectoine synthase (132 aa).

This sequence belongs to the ectoine synthase family.

The enzyme catalyses (2S)-4-acetamido-2-aminobutanoate = L-ectoine + H2O. The protein operates within amine and polyamine biosynthesis; ectoine biosynthesis; L-ectoine from L-aspartate 4-semialdehyde: step 3/3. Its function is as follows. Catalyzes the circularization of gamma-N-acetyl-alpha,gamma-diaminobutyric acid (ADABA) to ectoine (1,4,5,6-tetrahydro-2-methyl-4-pyrimidine carboxylic acid), which is an excellent osmoprotectant. In Hahella chejuensis (strain KCTC 2396), this protein is L-ectoine synthase.